The primary structure comprises 863 residues: DNA mismatch repair protein MutS (863 aa).

ATP is bound at residue 607–614; sequence GPNMAGKS.

Belongs to the DNA mismatch repair MutS family.

Its function is as follows. This protein is involved in the repair of mismatches in DNA. It is possible that it carries out the mismatch recognition step. This protein has a weak ATPase activity. This is DNA mismatch repair protein MutS from Caldicellulosiruptor saccharolyticus (strain ATCC 43494 / DSM 8903 / Tp8T 6331).